Consider the following 432-residue polypeptide: N-acylneuraminate cytidylyltransferase (432 aa).

Met-1 carries the post-translational modification N-acetylmethionine. A disordered region spans residues 1–38 (MDALEKGAVTSGPAPRGRPSRGRPPKLQRSRGAGRGLE). The short motif at 15–31 (PRGRPSRGRPPKLQRSR) is the BC1 motif element. A compositionally biased stretch (basic residues) spans 18-29 (RPSRGRPPKLQR). Arg-35 and Arg-50 each carry omega-N-methylarginine. Residues Arg-50, Asn-60, Arg-109, Ser-118, Ser-120, and Gln-141 each coordinate substrate. The short motif at 198–204 (KRPRRQD) is the BC2 motif element. The active site involves Arg-199. The BC3 motif signature appears at 267-274 (KEKLKEIK).

This sequence belongs to the CMP-NeuNAc synthase family. As to quaternary structure, homotetramer; the active enzyme is formed by a dimer of dimers. Highly expressed in brain and heart, and at intermediate level muscle and liver.

It is found in the nucleus. The enzyme catalyses an N-acylneuraminate + CTP = a CMP-N-acyl-beta-neuraminate + diphosphate. The protein operates within amino-sugar metabolism; N-acetylneuraminate metabolism. Functionally, catalyzes the activation of N-acetylneuraminic acid (NeuNAc) to cytidine 5'-monophosphate N-acetylneuraminic acid (CMP-NeuNAc), a substrate required for the addition of sialic acid. Has some activity toward NeuNAc, N-glycolylneuraminic acid (Neu5Gc) or 2-keto-3-deoxy-D-glycero-D-galacto-nononic acid (KDN). This is N-acylneuraminate cytidylyltransferase (Cmas) from Mus musculus (Mouse).